Consider the following 640-residue polypeptide: Protein ALTERED PHOSPHATE STARVATION RESPONSE 1 (640 aa).

A disordered region spans residues 60–175 (TPLHLHHNPP…ATPQASSVVS (116 aa)). Residues 68-87 (PPSPSPPPPPPPRPPPPPLS) are compositionally biased toward pro residues. A compositionally biased stretch (low complexity) spans 88–103 (PGSETTTWTTTTTSSV). The segment covering 104–118 (LPPPPPPPPPPPPPS) has biased composition (pro residues). Residues 144–173 (TTATRTATGTGSDAAVTTAPTTATPQASSV) show a composition bias toward low complexity. A coiled-coil region spans residues 336–371 (KTEKAKKDVEKLESQLSVSSQAIQSASNEIIKLRET).

As to expression, expressed in the root tip of primary and lateral roots, specifically in the meristematic region, including the quiescent center and lateral root cap cells.

It localises to the nucleus. In terms of biological role, required for the coordination of cell differentiation and cell elongation in the root tip. Required for the coordination of cell processes necessary for correct root growth in response to phosphate starvation, through the modulation of the auxin transporter protein PIN7. This chain is Protein ALTERED PHOSPHATE STARVATION RESPONSE 1, found in Arabidopsis thaliana (Mouse-ear cress).